A 455-amino-acid polypeptide reads, in one-letter code: Ribosomal protein uS12 methylthiotransferase RimO (455 aa).

The region spanning 30-140 (PTIGMVSLGC…VLDAVHGAVP (111 aa)) is the MTTase N-terminal domain. Residues Cys-39, Cys-75, Cys-104, Cys-171, Cys-175, and Cys-178 each coordinate [4Fe-4S] cluster. In terms of domain architecture, Radical SAM core spans 157–386 (LTPRHFSYLK…MEKAQAISEV (230 aa)). In terms of domain architecture, TRAM spans 389–455 (AAKVGRRIEV…GEYDIWGRPV (67 aa)).

The protein belongs to the methylthiotransferase family. RimO subfamily. [4Fe-4S] cluster is required as a cofactor.

It localises to the cytoplasm. It carries out the reaction L-aspartate(89)-[ribosomal protein uS12]-hydrogen + (sulfur carrier)-SH + AH2 + 2 S-adenosyl-L-methionine = 3-methylsulfanyl-L-aspartate(89)-[ribosomal protein uS12]-hydrogen + (sulfur carrier)-H + 5'-deoxyadenosine + L-methionine + A + S-adenosyl-L-homocysteine + 2 H(+). Its function is as follows. Catalyzes the methylthiolation of an aspartic acid residue of ribosomal protein uS12. In Cereibacter sphaeroides (strain ATCC 17023 / DSM 158 / JCM 6121 / CCUG 31486 / LMG 2827 / NBRC 12203 / NCIMB 8253 / ATH 2.4.1.) (Rhodobacter sphaeroides), this protein is Ribosomal protein uS12 methylthiotransferase RimO.